A 493-amino-acid polypeptide reads, in one-letter code: UDP-glucose 6-dehydrogenase (493 aa).

NAD(+) is bound by residues 11–16 (GAGYVG), Asp36, Arg41, and 89–93 (VNTPT). A disordered region spans residues 88–110 (SVNTPTKTYGMGKGRAADLKYIE). Residue Lys107 is modified to N6-acetyllysine. An allosteric switch region region spans residues 129 to 135 (KSTVPVR). 130–132 (STV) contributes to the NAD(+) binding site. Glu161 serves as the catalytic Proton donor/acceptor. Substrate contacts are provided by residues 161 to 165 (EFLAE), 220 to 224 (KLAAN), Arg260, and 267 to 273 (KASVGFG). Glu165 serves as a coordination point for NAD(+). Lys220 acts as the Proton donor/acceptor in catalysis. Cys276 serves as the catalytic Nucleophile. Residue 276-279 (CFQK) participates in NAD(+) binding. Positions 321–325 (SLFNT) are important for formation of active hexamer structure. 338 to 339 (FK) serves as a coordination point for substrate. Arg346 lines the NAD(+) pocket. Position 442 (Arg442) interacts with substrate. A disordered region spans residues 466–493 (VSSKRIPYTPGEIPKFSLQDPPNKKPKV). Phosphothreonine is present on Thr474.

Belongs to the UDP-glucose/GDP-mannose dehydrogenase family. In terms of assembly, homohexamer.

It catalyses the reaction UDP-alpha-D-glucose + 2 NAD(+) + H2O = UDP-alpha-D-glucuronate + 2 NADH + 3 H(+). Its pathway is nucleotide-sugar biosynthesis; UDP-alpha-D-glucuronate biosynthesis; UDP-alpha-D-glucuronate from UDP-alpha-D-glucose: step 1/1. Its activity is regulated as follows. UDP-alpha-D-xylose (UDX) acts as a feedback inhibitor. It binds at the same site as the substrate, but functions as allosteric inhibitor by triggering a conformation change that disrupts the active hexameric ring structure and gives rise to an inactive, horseshoe-shaped hexamer. Functionally, catalyzes the formation of UDP-alpha-D-glucuronate, a constituent of complex glycosaminoglycans. Required for the biosynthesis of chondroitin sulfate and heparan sulfate. Required for embryonic development via its role in the biosynthesis of glycosaminoglycans. Required for proper brain and neuronal development. The polypeptide is UDP-glucose 6-dehydrogenase (Ugdh) (Rattus norvegicus (Rat)).